The primary structure comprises 325 residues: NADH-quinone oxidoreductase subunit H (325 aa).

The next 8 membrane-spanning stretches (helical) occupy residues 11–31 (ILIS…CGAF), 81–101 (AIFT…FAIV), 114–134 (IGIL…LFAG), 154–174 (LSYE…VGSF), 186–206 (VWNV…GVAV), 237–257 (FFVG…TLFF), 265–285 (LPPF…FILI), and 304–324 (VCLP…LYNA).

This sequence belongs to the complex I subunit 1 family. NDH-1 is composed of 13 different subunits. Subunits NuoA, H, J, K, L, M, N constitute the membrane sector of the complex.

The protein localises to the cell inner membrane. The catalysed reaction is a quinone + NADH + 5 H(+)(in) = a quinol + NAD(+) + 4 H(+)(out). Functionally, NDH-1 shuttles electrons from NADH, via FMN and iron-sulfur (Fe-S) centers, to quinones in the respiratory chain. The immediate electron acceptor for the enzyme in this species is believed to be ubiquinone. Couples the redox reaction to proton translocation (for every two electrons transferred, four hydrogen ions are translocated across the cytoplasmic membrane), and thus conserves the redox energy in a proton gradient. This subunit may bind ubiquinone. In Yersinia pseudotuberculosis serotype O:3 (strain YPIII), this protein is NADH-quinone oxidoreductase subunit H.